Consider the following 400-residue polypeptide: Chalcone synthase C2 (400 aa).

The active site involves Cys168.

Belongs to the thiolase-like superfamily. Chalcone/stilbene synthases family.

The catalysed reaction is (E)-4-coumaroyl-CoA + 3 malonyl-CoA + 3 H(+) = 2',4,4',6'-tetrahydroxychalcone + 3 CO2 + 4 CoA. It functions in the pathway secondary metabolite biosynthesis; flavonoid biosynthesis. The primary product of this enzyme is 4,2',4',6'-tetrahydroxychalcone (also termed naringenin-chalcone or chalcone) which can under specific conditions spontaneously isomerize into naringenin. The chain is Chalcone synthase C2 (C2) from Zea mays (Maize).